A 418-amino-acid chain; its full sequence is Putative competence-damage inducible protein (418 aa).

This sequence belongs to the CinA family.

This chain is Putative competence-damage inducible protein, found in Streptococcus pneumoniae (strain 70585).